The primary structure comprises 629 residues: Glycerol-3-phosphate dehydrogenase SDP6, mitochondrial (629 aa).

A mitochondrion-targeting transit peptide spans 1-48 (MSLASIRRLAAGAAVIAAASGGAVYLSPSVASSDKGGGPILDSLRRRL). 75 to 103 (DVLVIGGGATGSGVALDAVTRGLRVGLVE) lines the FAD pocket.

This sequence belongs to the FAD-dependent glycerol-3-phosphate dehydrogenase family. FAD is required as a cofactor. In terms of tissue distribution, expressed in germinating seedlings. Also detected in roots, leaves, flowers, developing siliques and germinating seeds.

The protein localises to the mitochondrion inner membrane. The catalysed reaction is a quinone + sn-glycerol 3-phosphate = dihydroxyacetone phosphate + a quinol. It participates in polyol metabolism; glycerol degradation via glycerol kinase pathway; glycerone phosphate from sn-glycerol 3-phosphate (anaerobic route): step 1/1. Its function is as follows. Required for glycerol catabolism and involved in NADH/NAD(+) homeostasis. Essential for postgerminative growth and seedling establishment. The protein is Glycerol-3-phosphate dehydrogenase SDP6, mitochondrial of Arabidopsis thaliana (Mouse-ear cress).